Here is a 138-residue protein sequence, read N- to C-terminus: Small ribosomal subunit protein uS11c (138 aa).

The interval 1-24 (MAKAIPRSGSRRSGRIGSRKSTRR) is disordered. Residues 9–24 (GSRRSGRIGSRKSTRR) are compositionally biased toward basic residues.

This sequence belongs to the universal ribosomal protein uS11 family. As to quaternary structure, part of the 30S ribosomal subunit.

The protein localises to the plastid. It is found in the chloroplast. The protein is Small ribosomal subunit protein uS11c of Panax ginseng (Korean ginseng).